A 543-amino-acid chain; its full sequence is CTP synthase (543 aa).

The interval 1 to 265 is amidoligase domain; that stretch reads MTNYIFVTGG…DELVVQRFGL (265 aa). Ser13 provides a ligand contact to CTP. UTP is bound at residue Ser13. ATP-binding positions include 14-19 and Asp71; that span reads SLGKGI. The Mg(2+) site is built by Asp71 and Glu139. CTP contacts are provided by residues 146-148, 186-191, and Lys222; these read DIE and KTKPTQ. UTP contacts are provided by residues 186–191 and Lys222; that span reads KTKPTQ. 238 to 240 is a binding site for ATP; sequence KDA. The Glutamine amidotransferase type-1 domain maps to 290-541; it reads TIGMVGKYVE…VKAAGEYYKN (252 aa). Position 351 (Gly351) interacts with L-glutamine. Cys378 (nucleophile; for glutamine hydrolysis) is an active-site residue. Residues 379–382, Glu402, and Arg469 each bind L-glutamine; that span reads LGMQ. Active-site residues include His514 and Glu516.

The protein belongs to the CTP synthase family. In terms of assembly, homotetramer.

The enzyme catalyses UTP + L-glutamine + ATP + H2O = CTP + L-glutamate + ADP + phosphate + 2 H(+). It catalyses the reaction L-glutamine + H2O = L-glutamate + NH4(+). It carries out the reaction UTP + NH4(+) + ATP = CTP + ADP + phosphate + 2 H(+). The protein operates within pyrimidine metabolism; CTP biosynthesis via de novo pathway; CTP from UDP: step 2/2. Allosterically activated by GTP, when glutamine is the substrate; GTP has no effect on the reaction when ammonia is the substrate. The allosteric effector GTP functions by stabilizing the protein conformation that binds the tetrahedral intermediate(s) formed during glutamine hydrolysis. Inhibited by the product CTP, via allosteric rather than competitive inhibition. In terms of biological role, catalyzes the ATP-dependent amination of UTP to CTP with either L-glutamine or ammonia as the source of nitrogen. Regulates intracellular CTP levels through interactions with the four ribonucleotide triphosphates. The chain is CTP synthase from Pseudoalteromonas atlantica (strain T6c / ATCC BAA-1087).